A 251-amino-acid polypeptide reads, in one-letter code: 5'-nucleotidase SurE (251 aa).

Residues Asp-9, Asp-10, Ser-40, and Asn-94 each coordinate a divalent metal cation.

This sequence belongs to the SurE nucleotidase family. A divalent metal cation serves as cofactor.

Its subcellular location is the cytoplasm. It catalyses the reaction a ribonucleoside 5'-phosphate + H2O = a ribonucleoside + phosphate. Its function is as follows. Nucleotidase that shows phosphatase activity on nucleoside 5'-monophosphates. The sequence is that of 5'-nucleotidase SurE from Aquifex aeolicus (strain VF5).